A 1226-amino-acid polypeptide reads, in one-letter code: Arf guanine nucleotide exchange factor SYT1 (1226 aa).

Disordered regions lie at residues 17 to 39 (HSND…DKLR) and 113 to 158 (RNGQ…RNSK). Residues 131-142 (SIEKVPKPDGER) show a composition bias toward basic and acidic residues. T277 is subject to Phosphothreonine. Disordered stretches follow at residues 311–405 (NSLM…TGMS), 954–1022 (STGS…NEDY), and 1178–1198 (LEHG…DGID). Residues 349-360 (LSRSRSQSTSFV) are compositionally biased toward polar residues. S369 carries the phosphoserine modification. Over residues 386–405 (GPTSVYNNKSNANSTITGMS) the composition is skewed to polar residues. The region spanning 405 to 620 (SRRSSSIVNA…TYFYENVTAK (216 aa)) is the SEC7 domain. The region spanning 844 to 1074 (ILQMGAIMNL…DSINLFSAYD (231 aa)) is the PH domain. 2 stretches are compositionally biased toward low complexity: residues 956–969 (GSHT…SSSA) and 994–1017 (SSVS…SSND).

It is found in the cytoplasm. Its activity is regulated as follows. Inhibited by brefeldin A. Its function is as follows. Guanine nucleotide exchange factor for Arf GTPases, stimulating the nucleotide exchange from the GDP-bound to the GTP-bound form. Catalyzes both the GDP release by and the GTP binding to ARF2. Has no exchange activity on Rab GTPases. Involved in vesicular transport. This Saccharomyces cerevisiae (strain ATCC 204508 / S288c) (Baker's yeast) protein is Arf guanine nucleotide exchange factor SYT1 (SYT1).